A 216-amino-acid polypeptide reads, in one-letter code: Pyrophosphatase PpaX (216 aa).

The active-site Nucleophile is the Asp-9.

The protein belongs to the HAD-like hydrolase superfamily. PpaX family. The cofactor is Mg(2+).

It catalyses the reaction diphosphate + H2O = 2 phosphate + H(+). Hydrolyzes pyrophosphate formed during P-Ser-HPr dephosphorylation by HPrK/P. Might play a role in controlling the intracellular pyrophosphate pool. The chain is Pyrophosphatase PpaX from Bacillus cereus (strain Q1).